A 164-amino-acid polypeptide reads, in one-letter code: uncharacterized protein (164 aa).

This is an uncharacterized protein from Acanthamoeba polyphaga (Amoeba).